The following is a 391-amino-acid chain: 5-amino-6-(D-ribitylamino)uracil--L-tyrosine 4-hydroxyphenyl transferase (391 aa).

The Radical SAM core domain occupies 55-302 (VTYVINRNIN…GAVARIYLGN (248 aa)). Residues C69, C73, and C76 each contribute to the [4Fe-4S] cluster site.

The protein belongs to the radical SAM superfamily. CofH family. As to quaternary structure, consists of two subunits, CofG and CofH. Requires [4Fe-4S] cluster as cofactor.

The catalysed reaction is 5-amino-6-(D-ribitylamino)uracil + L-tyrosine + S-adenosyl-L-methionine = 5-amino-5-(4-hydroxybenzyl)-6-(D-ribitylimino)-5,6-dihydrouracil + 2-iminoacetate + 5'-deoxyadenosine + L-methionine + H(+). It participates in cofactor biosynthesis; coenzyme F0 biosynthesis. Its function is as follows. Catalyzes the radical-mediated synthesis of 5-amino-5-(4-hydroxybenzyl)-6-(D-ribitylimino)-5,6-dihydrouracil from 5-amino-6-(D-ribitylamino)uracil and L-tyrosine. This is 5-amino-6-(D-ribitylamino)uracil--L-tyrosine 4-hydroxyphenyl transferase from Trichormus variabilis (strain ATCC 29413 / PCC 7937) (Anabaena variabilis).